We begin with the raw amino-acid sequence, 688 residues long: MSFLLNLIPAISHTNHDEMHEPNQTHLHRHADTSPTNQHNTSHKMTTTEPIHVTTGSGESRDHTEPRHVTPTSPNALDGRRITIAYATETGNAQDFATLLGNACTRLRFESHVVQMNDLSPETLAQDVSVLVIVCSTTGQGEIPLNGKKLWKFLLRKKLPPNLLSHVTFTTFGLGDSSYPRFNWAIRKIHKRLSQLGASEVGSRGECDDMSPDSIETMYNEWQARFCESLLKAFPLPEGVEVIPGEKLLPAKFPVKVLTNKPKRDTSDADHVACTRKDVLQGTVVGNERVTAKGHFQDVRFFQIDANTEDNDMADLSRDFSKLNSDSRDLHDVSRAVSAGSSIDFSTGDTVSLFPQNSVADVDLLLRDQGWEDIADYKLDAPSLPPIEGGYVTPLTLRSLITHHLDIMGIPRQSFFTYVFHFATSERQKERLQEFSQPGEGLEDLFDYANRPRRSILEVVTEFDSLKIPLKYVLDVFPLMRPRLFSISQKAHTMPIQLCVAIVKYQTIIKRIREGVLTRWLGGLAIGQKIVFTKHSTPIPDLDNYDVIMVAPGTGVAPMRSLILSRESEKETVLFFGNRFREKDFLFQADLEKAVGDKKLNLFTSFSRDENSGGYVQQEMYRQKELVARVLCSKQGVLYVCGSSGKMPREVRITVVTCIQEVNGWTEEQAEEWVKGMEKSGRYLQETW.

Residues 26-76 (HLHRHADTSPTNQHNTSHKMTTTEPIHVTTGSGESRDHTEPRHVTPTSPNA) are disordered. The segment covering 33-58 (TSPTNQHNTSHKMTTTEPIHVTTGSG) has biased composition (polar residues). Basic and acidic residues predominate over residues 59–68 (ESRDHTEPRH). Residues 82-227 (ITIAYATETG…MYNEWQARFC (146 aa)) enclose the Flavodoxin-like domain. FMN contacts are provided by residues 88-93 (TETGNA), 136-139 (STTG), 174-183 (LGDSSYPRFN), and Asp-209. The FAD-binding FR-type domain maps to 277–543 (KDVLQGTVVG…KHSTPIPDLD (267 aa)). FAD is bound by residues Arg-453, 483-486 (RLFS), and 515-518 (GVLT). Residues Thr-554, 607 to 608 (SR), and 613 to 617 (GGYVQ) each bind NADP(+). An FAD-binding site is contributed by Trp-688.

The protein belongs to the NADPH-dependent diflavin oxidoreductase NDOR1 family. In the N-terminal section; belongs to the flavodoxin family. It in the C-terminal section; belongs to the flavoprotein pyridine nucleotide cytochrome reductase family. In terms of assembly, interacts with DRE2; as part of the cytosolic iron-sulfur (Fe-S) protein assembly (CIA) machinery. The cofactor is FAD. FMN serves as cofactor.

It is found in the cytoplasm. The protein localises to the mitochondrion. The catalysed reaction is 2 oxidized [2Fe-2S]-[protein] + NADPH = 2 reduced [2Fe-2S]-[protein] + NADP(+) + H(+). Its function is as follows. NADPH-dependent reductase which is a central component of the cytosolic iron-sulfur (Fe-S) protein assembly (CIA) machinery. Transfers electrons from NADPH via its FAD and FMN prosthetic groups to the [2Fe-2S] cluster of DRE2, another key component of the CIA machinery. In turn, this reduced cluster provides electrons for assembly of cytosolic iron-sulfur cluster proteins. Positively controls H(2)O(2)-induced cell death. The polypeptide is NADPH-dependent diflavin oxidoreductase 1 (Yarrowia lipolytica (strain CLIB 122 / E 150) (Yeast)).